The sequence spans 152 residues: MTCTDQKSHSQRALGTQTPALQGPQLLNTDPSSEETRPPHVNPDRLCHMEPANHFWHAGDLQAMISKEFHLAATQDDCRKGRTQEDILVPSSHPELFASVLPMAPEEAARLQQPQPLPPPSGIHLSASRTLAPTLLYSSPPSHSPFGLSSLI.

The span at 1-31 (MTCTDQKSHSQRALGTQTPALQGPQLLNTDP) shows a compositional bias: polar residues. Residues 1-42 (MTCTDQKSHSQRALGTQTPALQGPQLLNTDPSSEETRPPHVN) form a disordered region.

Expressed in skin. Also found in heart, placenta, liver, skeletal muscle and pancreas.

The sequence is that of Psoriasis susceptibility 1 candidate gene 1 protein (PSORS1C1) from Homo sapiens (Human).